The primary structure comprises 1262 residues: Putative late blight resistance protein homolog R1B-23 (1262 aa).

Coiled-coil stretches lie at residues 364-384 and 475-496; these read DSLAFLKNQLQVIQTKFESMQ and RMNEEIVGFEDVIETLRKKLLN. Positions 475 to 761 constitute an NB-ARC domain; that stretch reads RMNEEIVGFE…ISESFIKSCE (287 aa). Residue 508-515 participates in ATP binding; it reads GMPGLGKT. LRR repeat units follow at residues 890–914, 933–961, 1036–1059, 1064–1083, 1084–1112, and 1133–1157; these read FKFLKVLDLEHQVVIDSIPTELFYL, LWNLETLILNRTSAATGKTLLLPSTVWDM, PIRLEMLKLHQSNIFKPISFCISA, YLELSGFYLDSQYLSETADH, LKHLEVLKLYYVEFGDHREWKVSNGMFPQ, and FPNLEQLVLRRCRHLMEIPSCFMDI. One can recognise an HMA domain in the interval 1181–1248; the sequence is ETQVEDNQNT…KLRNVAYADE (68 aa).

It belongs to the disease resistance NB-LRR family.

The protein localises to the cytoplasm. It is found in the membrane. In terms of biological role, confers resistance to late blight (Phytophthora infestans) races carrying the avirulence gene Avr1. Resistance proteins guard the plant against pathogens that contain an appropriate avirulence protein via an indirect interaction with this avirulence protein. That triggers a defense system including the hypersensitive response, which restricts the pathogen growth. In Solanum demissum (Wild potato), this protein is Putative late blight resistance protein homolog R1B-23 (R1B-23).